A 190-amino-acid polypeptide reads, in one-letter code: dTTP/UTP pyrophosphatase (190 aa).

Asp68 functions as the Proton acceptor in the catalytic mechanism.

The protein belongs to the Maf family. YhdE subfamily. The cofactor is a divalent metal cation.

The protein resides in the cytoplasm. It catalyses the reaction dTTP + H2O = dTMP + diphosphate + H(+). It carries out the reaction UTP + H2O = UMP + diphosphate + H(+). Nucleoside triphosphate pyrophosphatase that hydrolyzes dTTP and UTP. May have a dual role in cell division arrest and in preventing the incorporation of modified nucleotides into cellular nucleic acids. The chain is dTTP/UTP pyrophosphatase from Acholeplasma laidlawii (strain PG-8A).